Here is a 51-residue protein sequence, read N- to C-terminus: Large ribosomal subunit protein eL39 (51 aa).

This sequence belongs to the eukaryotic ribosomal protein eL39 family.

This is Large ribosomal subunit protein eL39 from Thermococcus onnurineus (strain NA1).